The sequence spans 286 residues: MSLPMSPVSPINTTTSTSTTTTPLSPPSSIENSSHPLSTSISNNSITSDSSLDSNTSTSSTTTTNYGTKTPSGNARIFNCTLCQRAFTREEHLTRHTLSTHNKLKPFTCGICSRPFSRRDLLLRHAKNLHQGSEVAVSRIRKSYKHCNKDNDSKSGSDSNTNKTNKNGKKQEQEDDEEEGSRSDSSSGADDEDSNTSSGGSNYHAIGSGNKRFVNNSPQLKKILTNGSVPSTTTTSTTTVPTSTNNDTASITNSSTSHIHQRSLNVEDYDTPEKKRLKMSVNMLVS.

Composition is skewed to low complexity over residues 1–29 (MSLP…PPSS) and 37–65 (LSTS…TTTN). Positions 1-71 (MSLPMSPVSP…TTTNYGTKTP (71 aa)) are disordered. 2 C2H2-type zinc fingers span residues 78 to 101 (FNCT…LSTH) and 107 to 130 (FTCG…KNLH). Positions 146 to 260 (HCNKDNDSKS…ITNSSTSHIH (115 aa)) are disordered. Low complexity-rich tracts occupy residues 156–165 (GSDSNTNKTN) and 228–244 (SVPS…PTST). Polar residues predominate over residues 245–260 (NNDTASITNSSTSHIH).

It localises to the nucleus. Its function is as follows. Transcription factor required for yeast cell adherence to silicone substrate. In Candida albicans (strain SC5314 / ATCC MYA-2876) (Yeast), this protein is Transcriptional regulator of yeast form adherence 4 (TRY4).